A 38-amino-acid chain; its full sequence is Large ribosomal subunit protein bL36 (38 aa).

This sequence belongs to the bacterial ribosomal protein bL36 family.

This chain is Large ribosomal subunit protein bL36, found in Karelsulcia muelleri (strain GWSS) (Sulcia muelleri).